A 254-amino-acid chain; its full sequence is DNA repair protein RecO (254 aa).

The protein belongs to the RecO family.

Involved in DNA repair and RecF pathway recombination. In Agrobacterium fabrum (strain C58 / ATCC 33970) (Agrobacterium tumefaciens (strain C58)), this protein is DNA repair protein RecO.